A 108-amino-acid chain; its full sequence is Peptidyl-prolyl cis-trans isomerase FKBP1B (108 aa).

The region spanning G20–E108 is the PPIase FKBP-type domain.

In terms of assembly, identified in a complex composed of RYR2, FKBP1B, PKA catalytic subunit, PRKAR2A, AKAP6, and the protein phosphatases PP2A and PP1. Interacts directly with RYR2.

Its subcellular location is the cytoplasm. It localises to the sarcoplasmic reticulum. The catalysed reaction is [protein]-peptidylproline (omega=180) = [protein]-peptidylproline (omega=0). Its activity is regulated as follows. Inhibited by both FK506 and rapamycin. Its function is as follows. Has the potential to contribute to the immunosuppressive and toxic effects of FK506 and rapamycin. PPIases accelerate the folding of proteins. It catalyzes the cis-trans isomerization of proline imidic peptide bonds in oligopeptides. The chain is Peptidyl-prolyl cis-trans isomerase FKBP1B (FKBP1B) from Bos taurus (Bovine).